A 918-amino-acid chain; its full sequence is Melanoma-associated antigen E1 (918 aa).

Disordered stretches follow at residues M1 to A140, E154 to L227, and S367 to P388. The span at S8 to G23 shows a compositional bias: basic residues. 3 stretches are compositionally biased toward polar residues: residues V70 to P96, G113 to P126, and E213 to L227. 2 MAGE domains span residues M459–A658 and L706–A897. The segment at S704–R918 is interaction with DTNA.

Interacts with DTNA. Interacts with TRIM28. In terms of tissue distribution, expressed in cell bodies and dendrites of hippocampal and Purkinje neurons. Also expressed in peripheral nerve, where it localizes to the perineurium and myelin (at protein level). Predominantly expressed in brain and at low levels in the heart, liver, kidney, spleen, testis, lung, thymus, placenta and skeletal muscle.

Its subcellular location is the cytoplasm. The protein localises to the perinuclear region. The protein resides in the nucleus. It is found in the cell membrane. In terms of biological role, may enhance ubiquitin ligase activity of RING-type zinc finger-containing E3 ubiquitin-protein ligases. Proposed to act through recruitment and/or stabilization of the Ubl-conjugating enzyme (E2) at the E3:substrate complex. The chain is Melanoma-associated antigen E1 (Magee1) from Mus musculus (Mouse).